A 136-amino-acid polypeptide reads, in one-letter code: Large ribosomal subunit protein uL16 (136 aa).

This sequence belongs to the universal ribosomal protein uL16 family. Part of the 50S ribosomal subunit.

Binds 23S rRNA and is also seen to make contacts with the A and possibly P site tRNAs. In Vibrio campbellii (strain ATCC BAA-1116), this protein is Large ribosomal subunit protein uL16.